We begin with the raw amino-acid sequence, 220 residues long: Protein-L-isoaspartate O-methyltransferase (220 aa).

Residue serine 65 is part of the active site.

The protein belongs to the methyltransferase superfamily. L-isoaspartyl/D-aspartyl protein methyltransferase family.

Its subcellular location is the cytoplasm. The enzyme catalyses [protein]-L-isoaspartate + S-adenosyl-L-methionine = [protein]-L-isoaspartate alpha-methyl ester + S-adenosyl-L-homocysteine. In terms of biological role, catalyzes the methyl esterification of L-isoaspartyl residues in peptides and proteins that result from spontaneous decomposition of normal L-aspartyl and L-asparaginyl residues. It plays a role in the repair and/or degradation of damaged proteins. This is Protein-L-isoaspartate O-methyltransferase from Pelodictyon phaeoclathratiforme (strain DSM 5477 / BU-1).